A 143-amino-acid polypeptide reads, in one-letter code: AP-2 complex subunit sigma (143 aa).

Belongs to the adaptor complexes small subunit family. Adaptor protein complex 2 (AP-2) is a heterotetramer composed of two large adaptins (alpha-type subunit APL3 and beta-type subunit APL1), a medium chain (mu-type subunit APM4) and a small adaptin (sigma-type subunit APS2).

It is found in the cell membrane. Its subcellular location is the membrane. It localises to the coated pit. Functionally, component of the adaptor complexes which link clathrin to receptors in coated vesicles. Clathrin-associated protein complexes are believed to interact with the cytoplasmic tails of membrane proteins, leading to their selection and concentration. In Gibberella zeae (strain ATCC MYA-4620 / CBS 123657 / FGSC 9075 / NRRL 31084 / PH-1) (Wheat head blight fungus), this protein is AP-2 complex subunit sigma (APS2).